A 347-amino-acid polypeptide reads, in one-letter code: D-alanine--D-alanine ligase (347 aa).

The ATP-grasp domain maps to 134–332 (KLYAKDLGVK…LAQSLPKTPK (199 aa)). Residue 161-216 (LIKFNFPFIVKPSNAGSSLGVNVVKEEKELVYALDSAFEYSKEVLIEPFIQGVKEY) coordinates ATP. Residues aspartate 288, glutamate 300, and asparagine 302 each contribute to the Mg(2+) site.

This sequence belongs to the D-alanine--D-alanine ligase family. Mg(2+) is required as a cofactor. It depends on Mn(2+) as a cofactor.

Its subcellular location is the cytoplasm. It carries out the reaction 2 D-alanine + ATP = D-alanyl-D-alanine + ADP + phosphate + H(+). It participates in cell wall biogenesis; peptidoglycan biosynthesis. Functionally, cell wall formation. The chain is D-alanine--D-alanine ligase from Helicobacter pylori (strain P12).